The following is a 394-amino-acid chain: Phosphoglycerate kinase (394 aa).

Substrate contacts are provided by residues 21–23 (DFN), Arg-37, 60–63 (HLGR), Arg-119, and Arg-152. Residues Lys-202, Glu-324, and 350-353 (GGDS) each bind ATP.

Belongs to the phosphoglycerate kinase family. As to quaternary structure, monomer.

It is found in the cytoplasm. The catalysed reaction is (2R)-3-phosphoglycerate + ATP = (2R)-3-phospho-glyceroyl phosphate + ADP. Its pathway is carbohydrate degradation; glycolysis; pyruvate from D-glyceraldehyde 3-phosphate: step 2/5. The chain is Phosphoglycerate kinase from Carboxydothermus hydrogenoformans (strain ATCC BAA-161 / DSM 6008 / Z-2901).